Here is a 133-residue protein sequence, read N- to C-terminus: Heat shock protein 15 (133 aa).

The S4 RNA-binding domain occupies 9–71; the sequence is VRLDKWLWAA…DERTVIVKAI (63 aa). Residues 105–133 are disordered; sequence NALTMPHPDRRPDKKERRDLLRFKHGDSE. Basic and acidic residues predominate over residues 111-133; that stretch reads HPDRRPDKKERRDLLRFKHGDSE.

This sequence belongs to the HSP15 family. In terms of assembly, monomer.

In terms of biological role, involved in the recycling of free 50S ribosomal subunits that still carry a nascent chain. Binds RNA more specifically than DNA. Binds with very high affinity to the free 50S ribosomal subunit. Does not bind it when it is part of the 70S ribosome. In Escherichia coli O157:H7, this protein is Heat shock protein 15 (hslR).